Here is an 854-residue protein sequence, read N- to C-terminus: Glucans biosynthesis glucosyltransferase H (854 aa).

The next 7 membrane-spanning stretches (helical) occupy residues Ile-155 to Leu-175, Ile-209 to Met-229, Val-528 to Leu-548, Ile-583 to Leu-603, Phe-619 to Phe-639, Phe-671 to Leu-691, and Phe-695 to Tyr-715.

It belongs to the glycosyltransferase 2 family. OpgH subfamily.

The protein resides in the cell inner membrane. It functions in the pathway glycan metabolism; osmoregulated periplasmic glucan (OPG) biosynthesis. Its function is as follows. Involved in the biosynthesis of osmoregulated periplasmic glucans (OPGs). The chain is Glucans biosynthesis glucosyltransferase H from Pectobacterium atrosepticum (strain SCRI 1043 / ATCC BAA-672) (Erwinia carotovora subsp. atroseptica).